The chain runs to 367 residues: Peptide chain release factor 2 (367 aa).

N5-methylglutamine is present on Q254.

This sequence belongs to the prokaryotic/mitochondrial release factor family. Post-translationally, methylated by PrmC. Methylation increases the termination efficiency of RF2.

The protein resides in the cytoplasm. Peptide chain release factor 2 directs the termination of translation in response to the peptide chain termination codons UGA and UAA. This is Peptide chain release factor 2 from Acidovorax ebreus (strain TPSY) (Diaphorobacter sp. (strain TPSY)).